Here is a 252-residue protein sequence, read N- to C-terminus: Probable transcriptional regulator SauR (252 aa).

The HTH iclR-type domain occupies 6 to 68 (NAAAVRAFRI…AGNRHYECSS (63 aa)). A DNA-binding region (H-T-H motif) is located at residues 28-47 (LAAIVQAIELPKQTVHRILK). In terms of domain architecture, IclR-ED spans 83-252 (PAAARHAILQ…ADEMVKTFCE (170 aa)).

Its function is as follows. May regulate transcription of the sauSTU operon. The polypeptide is Probable transcriptional regulator SauR (sauR) (Cupriavidus necator (strain ATCC 17699 / DSM 428 / KCTC 22496 / NCIMB 10442 / H16 / Stanier 337) (Ralstonia eutropha)).